The following is a 286-amino-acid chain: uncharacterized protein (286 aa).

The protein belongs to the methyltransferase superfamily.

In terms of biological role, involved in osmoadaptation. This is an uncharacterized protein from Emericella nidulans (strain FGSC A4 / ATCC 38163 / CBS 112.46 / NRRL 194 / M139) (Aspergillus nidulans).